A 411-amino-acid polypeptide reads, in one-letter code: Imidazolonepropionase (411 aa).

Fe(3+) is bound by residues His-75 and His-77. Residues His-75 and His-77 each contribute to the Zn(2+) site. 4-imidazolone-5-propanoate is bound by residues Arg-84, Tyr-147, and His-180. Tyr-147 contacts N-formimidoyl-L-glutamate. A Fe(3+)-binding site is contributed by His-245. His-245 contributes to the Zn(2+) binding site. A 4-imidazolone-5-propanoate-binding site is contributed by Gln-248. A Fe(3+)-binding site is contributed by Asp-320. Asp-320 is a Zn(2+) binding site. 2 residues coordinate N-formimidoyl-L-glutamate: Asn-322 and Gly-324. Thr-325 contributes to the 4-imidazolone-5-propanoate binding site.

This sequence belongs to the metallo-dependent hydrolases superfamily. HutI family. It depends on Zn(2+) as a cofactor. Fe(3+) serves as cofactor.

The protein resides in the cytoplasm. The enzyme catalyses 4-imidazolone-5-propanoate + H2O = N-formimidoyl-L-glutamate. It participates in amino-acid degradation; L-histidine degradation into L-glutamate; N-formimidoyl-L-glutamate from L-histidine: step 3/3. Functionally, catalyzes the hydrolytic cleavage of the carbon-nitrogen bond in imidazolone-5-propanoate to yield N-formimidoyl-L-glutamate. It is the third step in the universal histidine degradation pathway. The sequence is that of Imidazolonepropionase from Aeromonas hydrophila subsp. hydrophila (strain ATCC 7966 / DSM 30187 / BCRC 13018 / CCUG 14551 / JCM 1027 / KCTC 2358 / NCIMB 9240 / NCTC 8049).